Consider the following 139-residue polypeptide: uncharacterized protein (139 aa).

A helical membrane pass occupies residues 43–59; it reads FGVISTLIAIFIGAFWL.

It is found in the membrane. This is an uncharacterized protein from Haemophilus influenzae (strain ATCC 51907 / DSM 11121 / KW20 / Rd).